The primary structure comprises 1196 residues: Sorbin and SH3 domain-containing protein 2 (1196 aa).

Disordered stretches follow at residues 25–57 (VQSSPNLLAAGRESHSPDSAWRSYNGRNPETLN) and 75–95 (PNLQDKKSPTQSHITINGNSG). Phosphoserine occurs at positions 27, 28, and 40. Polar residues predominate over residues 83–92 (PTQSHITING). S130 and S143 each carry phosphoserine. M148 bears the Alanine amide mark. A SoHo domain is found at 166-227 (VIKAPHYPGI…YNTPYTYNAG (62 aa)). The segment covering 235–247 (AQSHPAAKTQTYR) has biased composition (polar residues). 2 disordered regions span residues 235-314 (AQSH…EPGK) and 329-407 (SSID…GDDS). 2 stretches are compositionally biased toward basic and acidic residues: residues 252–262 (SHSDNGTDAFK) and 276–312 (RPRDQSSTEKHDWDPPDRKVDTRKFRSEPRSIFEYEP). S254 is subject to Phosphoserine. Polar residues predominate over residues 329–343 (SSIDRSLERPSSSAS). A phosphoserine mark is found at S334, S340, S343, and S354. Phosphothreonine is present on T372. A Phosphoserine modification is found at S382. Over residues 382 to 399 (SSSTFTTSFISSSPSSPS) the composition is skewed to low complexity. The residue at position 387 (T387) is a Phosphothreonine. Phosphoserine occurs at positions 392, 393, 394, 396, 397, 399, 478, 589, 592, 645, 648, 844, and 938. The disordered stretch occupies residues 929–958 (QDHESPRSYSSTLTDLGRSVSRERRGTPEK). The span at 948–958 (VSRERRGTPEK) shows a compositional bias: basic and acidic residues. 2 SH3 domains span residues 959–1018 (EVKL…KLTP) and 1034–1095 (GEIG…VVKR). A phosphoserine mark is found at S1113 and S1119. Positions 1137–1196 (GGGEPFQALYNYTPRNEDELELRESDVVDVMEKCDDGWFVGTSRRTKFFGTFPGNYVKRL) constitute an SH3 3 domain.

Interacts with ABL1/c-Abl, ABL2/v-Abl/Arg, ACTN, CBL and PALLD. Interacts with ABL, CBL, DNM1, DNM2, FLOT1, AFDN, PTK2B/PYK2, SAPAP, SPTAN1, SYNJ1, SYNJ2, VCL/vinculin and WASF. Interacts with PTPN12 and WASF1 via its SH3 domains; this interaction may mediate the partial PTPN12 and WASF1 translocation to focal adhesion sites. Post-translationally, ubiquitinated by CBL. As to expression, expressed in brain; found in synapses in cerebellum.

Its subcellular location is the cytoplasm. The protein resides in the perinuclear region. It is found in the apical cell membrane. The protein localises to the cell junction. It localises to the focal adhesion. Its subcellular location is the cell projection. The protein resides in the lamellipodium. Functionally, adapter protein that plays a role in the assembling of signaling complexes, being a link between ABL kinases and actin cytoskeleton. Can form complex with ABL1 and CBL, thus promoting ubiquitination and degradation of ABL1. May play a role in the regulation of pancreatic cell adhesion, possibly by acting on WASF1 phosphorylation, enhancing phosphorylation by ABL1, as well as dephosphorylation by PTPN12. Isoform 2 increases water and sodium absorption in the intestine and gall-bladder. This chain is Sorbin and SH3 domain-containing protein 2 (Sorbs2), found in Rattus norvegicus (Rat).